Reading from the N-terminus, the 403-residue chain is MKILVINAGSSSCKYQLLEMDTHAVLCSGLAERIGQDEGRLTHKIAPDTDKEEKIVQTAHFPTHVQAMEMVIALLTDAEKGVIKDKSEIAGIGHRVLHGGEAVSDPVLVDERVKGIVRECAVLGPLHNPANLMGIEVAEKLFPGVPNVAVFDTEFGMGMPKEAFMYALPYELYEDLRIRRYGFHGTSHKYIAGATAKYLGKPLSELRSITMHLGNGSSMSCVRNGKCFDTSMGLTPLEGLIMGTRCGSIDPAIVPFVMEKKGLTPEQVDTLMNKKSGLLGLCGHTDMRDVHAEVEKGNERAALALKMLVRSIKKTLGSYYFLLDGKVDALVFTAGIGENDDIVRAEVCAGLENLGIKIDAKENGTRKAGARAISTPDSSIPVLIIPTNEELQIAMATVEVLGK.

Residue N7 participates in Mg(2+) binding. K14 is a binding site for ATP. R95 provides a ligand contact to substrate. D152 (proton donor/acceptor) is an active-site residue. Residues 212 to 216 (HLGNG), 286 to 288 (DMR), and 335 to 339 (GIGEN) contribute to the ATP site. Position 389 (E389) interacts with Mg(2+).

Belongs to the acetokinase family. Homodimer. The cofactor is Mg(2+). Mn(2+) is required as a cofactor.

Its subcellular location is the cytoplasm. The enzyme catalyses acetate + ATP = acetyl phosphate + ADP. Its pathway is metabolic intermediate biosynthesis; acetyl-CoA biosynthesis; acetyl-CoA from acetate: step 1/2. Its function is as follows. Catalyzes the formation of acetyl phosphate from acetate and ATP. Can also catalyze the reverse reaction. The polypeptide is Acetate kinase (Desulfovibrio desulfuricans (strain ATCC 27774 / DSM 6949 / MB)).